A 374-amino-acid polypeptide reads, in one-letter code: Anhydro-N-acetylmuramic acid kinase (374 aa).

12 to 19 (GTSLDGVD) is an ATP binding site.

It belongs to the anhydro-N-acetylmuramic acid kinase family.

The catalysed reaction is 1,6-anhydro-N-acetyl-beta-muramate + ATP + H2O = N-acetyl-D-muramate 6-phosphate + ADP + H(+). Its pathway is amino-sugar metabolism; 1,6-anhydro-N-acetylmuramate degradation. It participates in cell wall biogenesis; peptidoglycan recycling. Catalyzes the specific phosphorylation of 1,6-anhydro-N-acetylmuramic acid (anhMurNAc) with the simultaneous cleavage of the 1,6-anhydro ring, generating MurNAc-6-P. Is required for the utilization of anhMurNAc either imported from the medium or derived from its own cell wall murein, and thus plays a role in cell wall recycling. The chain is Anhydro-N-acetylmuramic acid kinase from Enterobacter sp. (strain 638).